Reading from the N-terminus, the 445-residue chain is Trigger factor (445 aa).

The PPIase FKBP-type domain occupies 162–247; the sequence is GDQVTIDAIG…IKAVHTAEPT (86 aa).

Belongs to the FKBP-type PPIase family. Tig subfamily.

The protein resides in the cytoplasm. It carries out the reaction [protein]-peptidylproline (omega=180) = [protein]-peptidylproline (omega=0). Its function is as follows. Involved in protein export. Acts as a chaperone by maintaining the newly synthesized protein in an open conformation. Functions as a peptidyl-prolyl cis-trans isomerase. The protein is Trigger factor of Rickettsia rickettsii (strain Sheila Smith).